Here is a 402-residue protein sequence, read N- to C-terminus: Succinyl-diaminopimelate desuccinylase (402 aa).

Histidine 88 contributes to the Zn(2+) binding site. The active site involves aspartate 90. Aspartate 121 is a Zn(2+) binding site. Catalysis depends on glutamate 155, which acts as the Proton acceptor. Zn(2+) contacts are provided by glutamate 156, glutamate 184, and histidine 374.

This sequence belongs to the peptidase M20A family. DapE subfamily. Homodimer. Zn(2+) is required as a cofactor. Requires Co(2+) as cofactor.

It carries out the reaction N-succinyl-(2S,6S)-2,6-diaminopimelate + H2O = (2S,6S)-2,6-diaminopimelate + succinate. It participates in amino-acid biosynthesis; L-lysine biosynthesis via DAP pathway; LL-2,6-diaminopimelate from (S)-tetrahydrodipicolinate (succinylase route): step 3/3. Its function is as follows. Catalyzes the hydrolysis of N-succinyl-L,L-diaminopimelic acid (SDAP), forming succinate and LL-2,6-diaminopimelate (DAP), an intermediate involved in the bacterial biosynthesis of lysine and meso-diaminopimelic acid, an essential component of bacterial cell walls. This is Succinyl-diaminopimelate desuccinylase from Psychrobacter sp. (strain PRwf-1).